The sequence spans 143 residues: Flagellar assembly factor FliW (143 aa).

Belongs to the FliW family. Interacts with translational regulator CsrA and flagellin(s).

The protein resides in the cytoplasm. Its function is as follows. Acts as an anti-CsrA protein, binds CsrA and prevents it from repressing translation of its target genes, one of which is flagellin. Binds to flagellin and participates in the assembly of the flagellum. The polypeptide is Flagellar assembly factor FliW (Bacillus licheniformis (strain ATCC 14580 / DSM 13 / JCM 2505 / CCUG 7422 / NBRC 12200 / NCIMB 9375 / NCTC 10341 / NRRL NRS-1264 / Gibson 46)).